Here is a 185-residue protein sequence, read N- to C-terminus: Peptidyl-tRNA hydrolase (185 aa).

Tyr14 lines the tRNA pocket. His19 serves as the catalytic Proton acceptor. TRNA is bound by residues Phe64, Asn66, and Asn112.

The protein belongs to the PTH family. Monomer.

The protein localises to the cytoplasm. It carries out the reaction an N-acyl-L-alpha-aminoacyl-tRNA + H2O = an N-acyl-L-amino acid + a tRNA + H(+). Its function is as follows. Hydrolyzes ribosome-free peptidyl-tRNAs (with 1 or more amino acids incorporated), which drop off the ribosome during protein synthesis, or as a result of ribosome stalling. Functionally, catalyzes the release of premature peptidyl moieties from peptidyl-tRNA molecules trapped in stalled 50S ribosomal subunits, and thus maintains levels of free tRNAs and 50S ribosomes. The polypeptide is Peptidyl-tRNA hydrolase (Lactobacillus gasseri (strain ATCC 33323 / DSM 20243 / BCRC 14619 / CIP 102991 / JCM 1131 / KCTC 3163 / NCIMB 11718 / NCTC 13722 / AM63)).